The primary structure comprises 294 residues: 4-hydroxy-tetrahydrodipicolinate synthase (294 aa).

Thr45 contributes to the pyruvate binding site. Tyr133 serves as the catalytic Proton donor/acceptor. Residue Lys161 is the Schiff-base intermediate with substrate of the active site. Ile203 contacts pyruvate.

It belongs to the DapA family. As to quaternary structure, homotetramer; dimer of dimers.

The protein resides in the cytoplasm. The enzyme catalyses L-aspartate 4-semialdehyde + pyruvate = (2S,4S)-4-hydroxy-2,3,4,5-tetrahydrodipicolinate + H2O + H(+). Its pathway is amino-acid biosynthesis; L-lysine biosynthesis via DAP pathway; (S)-tetrahydrodipicolinate from L-aspartate: step 3/4. In terms of biological role, catalyzes the condensation of (S)-aspartate-beta-semialdehyde [(S)-ASA] and pyruvate to 4-hydroxy-tetrahydrodipicolinate (HTPA). This Alcanivorax borkumensis (strain ATCC 700651 / DSM 11573 / NCIMB 13689 / SK2) protein is 4-hydroxy-tetrahydrodipicolinate synthase.